Consider the following 762-residue polypeptide: 1-phosphatidylinositol 4,5-bisphosphate phosphodiesterase delta-4 (762 aa).

The 109-residue stretch at 16–124 folds into the PH domain; the sequence is LLMQEGMPMR…WMRGLQLLVD (109 aa). Residues 26–53 form a substrate binding region; the sequence is KVRSKSWKKLRYFRLQNDGMTVWHARQA. 3 EF-hand domains span residues 134–169, 170–205, and 206–237; these read RLDQ…MNVE, MDQE…LTKR, and AEVQ…EQKE. Asp147, Asn149, Asp151, Lys153, Glu158, Asp183, Ser185, Ser187, Thr189, and Glu194 together coordinate Ca(2+). The GBA motif lies at 213–243; sequence ESFSADGQKLTLLEFLDFLQEEQKERDCTSE. The region spanning 290–435 is the PI-PLC X-box domain; that stretch reads QDMTQPLNHY…LRRKILVKGK (146 aa). Residue His305 is part of the active site. Asn306, Glu335, and Asp337 together coordinate Ca(2+). His350 is an active-site residue. Glu384 is a Ca(2+) binding site. Substrate is bound by residues Lys433 and Lys435. The span at 443–471 shows a compositional bias: acidic residues; that stretch reads LEYEEEEAEPELEESELALESQFETEPEP. The interval 443 to 483 is disordered; the sequence is LEYEEEEAEPELEESELALESQFETEPEPQEQNLQNKDKKK. Ser457 carries the phosphoserine modification. One can recognise a PI-PLC Y-box domain in the interval 493-609; the sequence is LSSLVIYLKS…GYVLKPDFLR (117 aa). 2 residues coordinate substrate: Ser522 and Arg549. Residues 609 to 736 form the C2 domain; that stretch reads RDIQSSFHPE…QGYRHIHLLS (128 aa). Ca(2+) contacts are provided by Ile650, Asp652, Asn676, Asp705, Tyr706, and Asp707. The PDZ-binding motif lies at 731–734; sequence HIHL.

In terms of assembly, interacts with GRIP1. Interacts (via GBA motif) with guanine nucleotide-binding protein G(i) alpha subunit GNAI3 (inactive GDP-bound form); high-affinity interaction. As to quaternary structure, interacts (via GBA motif) with guanine nucleotide-binding protein G(i) alpha subunit GNAI3 (inactive GDP-bound form); low-affinity interaction. Ca(2+) is required as a cofactor. Highly expressed in skeletal muscle and kidney tissues, and at moderate level in intestinal tissue. Expressed in corneal epithelial cells.

The protein localises to the membrane. Its subcellular location is the nucleus. The protein resides in the cytoplasm. It is found in the endoplasmic reticulum. It catalyses the reaction a 1,2-diacyl-sn-glycero-3-phospho-(1D-myo-inositol-4,5-bisphosphate) + H2O = 1D-myo-inositol 1,4,5-trisphosphate + a 1,2-diacyl-sn-glycerol + H(+). The enzyme catalyses a 1,2-diacyl-sn-glycero-3-phospho-(1D-myo-inositol) + H2O = 1D-myo-inositol 1-phosphate + a 1,2-diacyl-sn-glycerol + H(+). Hydrolyzes the phosphatidylinositol 4,5-bisphosphate (PIP2) to generate 2 second messenger molecules diacylglycerol (DAG) and inositol 1,4,5-trisphosphate (IP3). DAG mediates the activation of protein kinase C (PKC), while IP3 releases Ca(2+) from intracellular stores. Required for acrosome reaction in sperm during fertilization, probably by acting as an important enzyme for intracellular Ca(2+) mobilization in the zona pellucida-induced acrosome reaction. May play a role in cell growth. Modulates the liver regeneration in cooperation with nuclear PKC. Overexpression up-regulates the Erk signaling pathway and proliferation. Functionally, acts as a non-receptor guanine nucleotide exchange factor which binds to and activates guanine nucleotide-binding protein (G-protein) alpha subunit GNAI3. This chain is 1-phosphatidylinositol 4,5-bisphosphate phosphodiesterase delta-4, found in Homo sapiens (Human).